The primary structure comprises 274 residues: Beta-lactamase OXA-9 (274 aa).

A signal peptide spans 1–24; sequence MKKILLLHMLVFVSATLPISSVAS. The active-site Acyl-ester intermediate is the Ser58. At Lys61 the chain carries N6-carboxylysine. 206–208 is a binding site for substrate; sequence KSG.

This sequence belongs to the class-D beta-lactamase family.

The catalysed reaction is a beta-lactam + H2O = a substituted beta-amino acid. In terms of biological role, oxacillin-hydrolyzing beta-lactamase. Confers resistance to beta-lactam antibiotics but at a significantly lower level than the TEM bla gene product. The sequence is that of Beta-lactamase OXA-9 (bla) from Klebsiella aerogenes (Enterobacter aerogenes).